The sequence spans 168 residues: Calcium-binding protein 2 (168 aa).

4 consecutive EF-hand domains span residues 13 to 48 (GMEK…AGKK), 48 to 83 (KNPE…MNDE), 88 to 123 (VLNW…QGAE), and 124 to 159 (DPEL…KKFS). Residues Asp-26, Asp-28, Asn-30, Lys-32, Glu-37, Asp-61, Asp-63, Asn-65, Glu-67, Glu-72, Asp-101, Asp-103, Asp-105, Lys-107, Glu-112, Asp-137, Asp-139, Asp-141, and Glu-148 each coordinate Ca(2+).

Not known; probably binds four calcium ions. This Dictyostelium discoideum (Social amoeba) protein is Calcium-binding protein 2 (cbp2).